We begin with the raw amino-acid sequence, 591 residues long: Mono(ADP-ribosyl)transferase SpvB (591 aa).

Positions 373-576 constitute a TR mART core domain; the sequence is PMMGGNSSRP…LRLSDDATAD (204 aa). Residues Arg-414 and 471 to 477 each bind NAD(+); that span reads RGLKLDK. Residues Arg-471, Ser-501, and Glu-538 contribute to the active site. Glu-538 serves as a coordination point for NAD(+).

It belongs to the SpvB family.

It is found in the secreted. It catalyses the reaction L-arginyl-[protein] + NAD(+) = N(omega)-(ADP-D-ribosyl)-L-arginyl-[protein] + nicotinamide + H(+). Its activity is regulated as follows. Inhibited by novobiocin. Functionally, mono-ADP-ribosylates eukaryotic muscle and non-muscle actin on 'Arg-177'. ADP-ribosylates all actins tested, has more activity on nonmuscle beta/gamma-actin than on muscle alpha-actin. Prefers monomeric G-actin but can weakly ADP-ribosylate F-actin. ADP-ribosylation prevents the polymerization of G-actin to F-actin, causing actin filament depolymerization, destruction of the cytoskeleton and cytotoxicity. Does not possess NAD(+)-glycohydrolase activity, unlike most mART enzymes. In Salmonella typhimurium, this protein is Mono(ADP-ribosyl)transferase SpvB (spvB).